A 637-amino-acid polypeptide reads, in one-letter code: tRNA uridine 5-carboxymethylaminomethyl modification enzyme MnmG (637 aa).

18-23 (GAGHAG) provides a ligand contact to FAD. Residue 282-296 (GPRYCPSIEDKIVRF) participates in NAD(+) binding.

Belongs to the MnmG family. As to quaternary structure, homodimer. Heterotetramer of two MnmE and two MnmG subunits. FAD is required as a cofactor.

It is found in the cytoplasm. Its function is as follows. NAD-binding protein involved in the addition of a carboxymethylaminomethyl (cmnm) group at the wobble position (U34) of certain tRNAs, forming tRNA-cmnm(5)s(2)U34. In Pediococcus pentosaceus (strain ATCC 25745 / CCUG 21536 / LMG 10740 / 183-1w), this protein is tRNA uridine 5-carboxymethylaminomethyl modification enzyme MnmG.